We begin with the raw amino-acid sequence, 239 residues long: 1-(5-phosphoribosyl)-5-[(5-phosphoribosylamino)methylideneamino] imidazole-4-carboxamide isomerase (239 aa).

D8 acts as the Proton acceptor in catalysis. D129 (proton donor) is an active-site residue.

It belongs to the HisA/HisF family.

The protein resides in the cytoplasm. The enzyme catalyses 1-(5-phospho-beta-D-ribosyl)-5-[(5-phospho-beta-D-ribosylamino)methylideneamino]imidazole-4-carboxamide = 5-[(5-phospho-1-deoxy-D-ribulos-1-ylimino)methylamino]-1-(5-phospho-beta-D-ribosyl)imidazole-4-carboxamide. It functions in the pathway amino-acid biosynthesis; L-histidine biosynthesis; L-histidine from 5-phospho-alpha-D-ribose 1-diphosphate: step 4/9. This chain is 1-(5-phosphoribosyl)-5-[(5-phosphoribosylamino)methylideneamino] imidazole-4-carboxamide isomerase, found in Legionella pneumophila subsp. pneumophila (strain Philadelphia 1 / ATCC 33152 / DSM 7513).